The chain runs to 158 residues: Protein FAM177B (158 aa).

Residues 36–48 (EYSTEEEEEEEKE) show a composition bias toward acidic residues. A disordered region spans residues 36–59 (EYSTEEEEEEEKEEQSTNSTLDPS).

The protein belongs to the FAM177 family.

This Homo sapiens (Human) protein is Protein FAM177B (FAM177B).